Here is a 1495-residue protein sequence, read N- to C-terminus: Chromosome partition protein MukB (1495 aa).

60–67 (GGNGAGKS) contacts ATP. 3 coiled-coil regions span residues 322 to 693 (RART…SQPD), 861 to 1140 (EDVM…AKVS), and 1233 to 1289 (IDAI…LQNI). Positions 692–809 (PDGSEDARLN…EIPLFGRAAR (118 aa)) are flexible hinge.

This sequence belongs to the SMC family. MukB subfamily. Homodimerization via its hinge domain. Binds to DNA via its C-terminal region. Interacts, and probably forms a ternary complex, with MukE and MukF via its C-terminal region. The complex formation is stimulated by calcium or magnesium. Interacts with tubulin-related protein FtsZ.

Its subcellular location is the cytoplasm. The protein resides in the nucleoid. Functionally, plays a central role in chromosome condensation, segregation and cell cycle progression. Functions as a homodimer, which is essential for chromosome partition. Involved in negative DNA supercoiling in vivo, and by this means organize and compact chromosomes. May achieve or facilitate chromosome segregation by condensation DNA from both sides of a centrally located replisome during cell division. In Pasteurella multocida (strain Pm70), this protein is Chromosome partition protein MukB.